A 193-amino-acid polypeptide reads, in one-letter code: Peptidyl-tRNA hydrolase (193 aa).

Residue H17 coordinates tRNA. H22 functions as the Proton acceptor in the catalytic mechanism. TRNA contacts are provided by F68, N70, and N116.

Belongs to the PTH family. Monomer.

It localises to the cytoplasm. The catalysed reaction is an N-acyl-L-alpha-aminoacyl-tRNA + H2O = an N-acyl-L-amino acid + a tRNA + H(+). Hydrolyzes ribosome-free peptidyl-tRNAs (with 1 or more amino acids incorporated), which drop off the ribosome during protein synthesis, or as a result of ribosome stalling. Its function is as follows. Catalyzes the release of premature peptidyl moieties from peptidyl-tRNA molecules trapped in stalled 50S ribosomal subunits, and thus maintains levels of free tRNAs and 50S ribosomes. The sequence is that of Peptidyl-tRNA hydrolase from Xanthomonas axonopodis pv. citri (strain 306).